The primary structure comprises 2587 residues: Clavatol synthase claF (2587 aa).

Residues 93–256 are N-terminal acylcarrier protein transacylase domain (SAT); the sequence is LLSPLVVIVQ…TEVALSGRFH (164 aa). The Nucleophile; for transacylase activity role is filled by Cys137. The Proton donor/acceptor; for transacylase activity role is filled by His256. The 417-residue stretch at 383-799 folds into the Ketosynthase family 3 (KS3) domain; sequence DDQIAVIGMA…GSNASMIITQ (417 aa). Active-site for beta-ketoacyl synthase activity residues include Cys548, His683, and His722. A malonyl-CoA:ACP transacylase (MAT) domain region spans residues 912 to 1222; that stretch reads CFGGQISTYV…ESLPLLAEAT (311 aa). Residues 1284 to 1416 are N-terminal hotdog fold; sequence PKGLTTFIGF…GSIVFLPASD (133 aa). Positions 1284–1595 constitute a PKS/mFAS DH domain; the sequence is PKGLTTFIGF…YRLVPMDSMR (312 aa). Residues 1315-1593 are product template (PT) domain; the sequence is LTSANVALNT…ISYRLVPMDS (279 aa). The segment at 1436-1595 is C-terminal hotdog fold; that stretch reads ASLLQGNGAD…YRLVPMDSMR (160 aa). Residues 1609 to 1635 form a disordered region; it reads STAAVSSKSTPVHAPTPTTTVSSTPSS. Over residues 1617 to 1635 the composition is skewed to low complexity; the sequence is STPVHAPTPTTTVSSTPSS. Residues 1654–1728 form the Carrier domain; that stretch reads PDISAKMCEI…SLVSCIRSTL (75 aa). Ser1688 bears the O-(pantetheine 4'-phosphoryl)serine mark. Active-site for methyltransferase activity residues include Tyr1947, His2059, and Glu2085. Residues 1952 to 2126 are methyltransferase (CMeT) domain; it reads VNTVWIKQLE…ATYWEKVLQS (175 aa). The segment at 2208–2452 is NADPH-binding (R) domain; the sequence is SLSSGQCVLV…KILPELDGTL (245 aa).

Pantetheine 4'-phosphate is required as a cofactor.

It carries out the reaction 3 malonyl-CoA + acetyl-CoA + AH2 + 2 S-adenosyl-L-methionine + H(+) = clavatol + A + 2 S-adenosyl-L-homocysteine + 3 CO2 + 4 CoA + H2O. Its pathway is secondary metabolite biosynthesis. In terms of biological role, non-reducing polyketide synthase; part of the cla gene cluster that produces clavatol and ortho-quinone methide. The clavatol biosynthesis cluster cla and the terrestric acid cluster tra are both involved in the production of peniphenones and penilactones. The non-reducing PKS claF is responsible for the formation of clavatol from successive condensations of 3 malonyl-CoA units, presumably with a simple acetyl-CoA starter unit, and 2 methylation steps. The esterase claE probably collaborates with claF by catalyzing the hydrolysis of ACP-bound acyl intermediates to free the ACP from stalled intermediates. The clavatol oxidase claD then converts clavatol to hydroxyclavatol. Spontaneous dehydration of hydroxyclavatol leads to the accumulation of the highly active ortho-quinone methide. On the other hand, the PKS-NRPS hybrid traA is involved in the formation of crustosic acid, with the help of traB and traD. The polyketide synthase module (PKS) of traA is responsible for the synthesis of the polyketide backbone via the condensation of an acetyl-CoA starter unit with 3 malonyl-CoA units. The downstream nonribosomal peptide synthetase (NRPS) module then amidates the carboxyl end of the polyketide with L-malic acid. Because traA lacks a designated enoylreductase (ER) domain, the required activity is provided the enoyl reductase traG. Crustosic acid undergoes decarboxylation and isomerization to the terrestric acid, catalyzed by the 2-oxoglutarate-dependent dioxygenase traH. Both acids are further converted to the 2 gamma-butyrolactones (R)-5-methyltetronic acid and (S)-5-carboxylmethyltetronic acid, with involvement of the cytochrome P450 monooxygenase claJ. Spontaneous addition of the methide to these gamma-butyrolactones leads to peniphenone D and penilactone D, which undergo again stereospecific attacking by methide to give penilactones A and B. The chain is Clavatol synthase claF from Penicillium crustosum (Blue mold fungus).